The primary structure comprises 106 residues: Iron-sulfur cluster assembly protein CyaY (106 aa).

The protein belongs to the frataxin family.

Functionally, involved in iron-sulfur (Fe-S) cluster assembly. May act as a regulator of Fe-S biogenesis. In Salmonella typhimurium (strain LT2 / SGSC1412 / ATCC 700720), this protein is Iron-sulfur cluster assembly protein CyaY.